Here is a 435-residue protein sequence, read N- to C-terminus: Serine--tRNA ligase (435 aa).

238-240 (TAE) contributes to the L-serine binding site. 269–271 (RKE) contributes to the ATP binding site. Residue Glu-292 participates in L-serine binding. Residue 356-359 (EISS) coordinates ATP. Residue Ser-391 participates in L-serine binding.

This sequence belongs to the class-II aminoacyl-tRNA synthetase family. Type-1 seryl-tRNA synthetase subfamily. Homodimer. The tRNA molecule binds across the dimer.

It localises to the cytoplasm. The enzyme catalyses tRNA(Ser) + L-serine + ATP = L-seryl-tRNA(Ser) + AMP + diphosphate + H(+). It catalyses the reaction tRNA(Sec) + L-serine + ATP = L-seryl-tRNA(Sec) + AMP + diphosphate + H(+). The protein operates within aminoacyl-tRNA biosynthesis; selenocysteinyl-tRNA(Sec) biosynthesis; L-seryl-tRNA(Sec) from L-serine and tRNA(Sec): step 1/1. In terms of biological role, catalyzes the attachment of serine to tRNA(Ser). Is also able to aminoacylate tRNA(Sec) with serine, to form the misacylated tRNA L-seryl-tRNA(Sec), which will be further converted into selenocysteinyl-tRNA(Sec). This is Serine--tRNA ligase from Leuconostoc mesenteroides subsp. mesenteroides (strain ATCC 8293 / DSM 20343 / BCRC 11652 / CCM 1803 / JCM 6124 / NCDO 523 / NBRC 100496 / NCIMB 8023 / NCTC 12954 / NRRL B-1118 / 37Y).